The chain runs to 365 residues: Peptide chain release factor 1 (365 aa).

The residue at position 242 (Gln-242) is an N5-methylglutamine.

The protein belongs to the prokaryotic/mitochondrial release factor family. In terms of processing, methylated by PrmC. Methylation increases the termination efficiency of RF1.

It localises to the cytoplasm. In terms of biological role, peptide chain release factor 1 directs the termination of translation in response to the peptide chain termination codons UAG and UAA. The protein is Peptide chain release factor 1 of Fusobacterium nucleatum subsp. nucleatum (strain ATCC 25586 / DSM 15643 / BCRC 10681 / CIP 101130 / JCM 8532 / KCTC 2640 / LMG 13131 / VPI 4355).